We begin with the raw amino-acid sequence, 63 residues long: MMFRLTSVLLVIVLLNLVVLTNACHMDCSKMICCSGICCFYCGLPSCDDTRRALLQRLLGHQR.

Positions methionine 1–alanine 23 are cleaved as a signal peptide. 4 disulfides stabilise this stretch: cysteine 24-cysteine 34, cysteine 28-cysteine 39, cysteine 33-cysteine 42, and cysteine 38-cysteine 47. The propeptide occupies alanine 53–arginine 63.

It belongs to the conotoxin I2 superfamily. Expressed by the venom duct.

Its subcellular location is the secreted. This Conus litteratus (Lettered cone) protein is Conotoxin Lt11.1.